The following is a 415-amino-acid chain: ATP-dependent Clp protease ATP-binding subunit ClpX (415 aa).

Positions 1–52 (MAESKNNKKRCSFCGRSENEVGFLITGMNGYICDSCATQAYEITQEAMGAGK) constitute a ClpX-type ZB domain. Residues C11, C14, C33, and C36 each contribute to the Zn(2+) site. 121–128 (STGTGKTL) is an ATP binding site.

Belongs to the ClpX chaperone family. As to quaternary structure, component of the ClpX-ClpP complex. Forms a hexameric ring that, in the presence of ATP, binds to fourteen ClpP subunits assembled into a disk-like structure with a central cavity, resembling the structure of eukaryotic proteasomes.

Its function is as follows. ATP-dependent specificity component of the Clp protease. It directs the protease to specific substrates. Can perform chaperone functions in the absence of ClpP. The sequence is that of ATP-dependent Clp protease ATP-binding subunit ClpX from Bacteroides fragilis (strain ATCC 25285 / DSM 2151 / CCUG 4856 / JCM 11019 / LMG 10263 / NCTC 9343 / Onslow / VPI 2553 / EN-2).